Here is a 101-residue protein sequence, read N- to C-terminus: Small ribosomal subunit protein uS14 (101 aa).

This sequence belongs to the universal ribosomal protein uS14 family. In terms of assembly, part of the 30S ribosomal subunit. Contacts proteins S3 and S10.

Its function is as follows. Binds 16S rRNA, required for the assembly of 30S particles and may also be responsible for determining the conformation of the 16S rRNA at the A site. This is Small ribosomal subunit protein uS14 from Chlamydia muridarum (strain MoPn / Nigg).